The following is a 131-amino-acid chain: MRYGEKEIQEFDPKKDLEIWPNKHNKPYKIKITLPEFSCLCPRSGYPDYATMHLEYIPDQYVVELKALKLYINSFRNRYISHEDSTNEIFDTLYSKLKPKYMRLVADFNPRGNVHTLIEIDSEEIEKVSNG.

Cys-41 serves as the catalytic Thioimide intermediate. The Proton donor role is filled by Asp-48. Residues 63-65 and 82-83 contribute to the substrate site; these read VEL and HE.

This sequence belongs to the GTP cyclohydrolase I family. QueF type 1 subfamily.

Its subcellular location is the cytoplasm. The enzyme catalyses 7-aminomethyl-7-carbaguanine + 2 NADP(+) = 7-cyano-7-deazaguanine + 2 NADPH + 3 H(+). The protein operates within tRNA modification; tRNA-queuosine biosynthesis. Its function is as follows. Catalyzes the NADPH-dependent reduction of 7-cyano-7-deazaguanine (preQ0) to 7-aminomethyl-7-deazaguanine (preQ1). The sequence is that of NADPH-dependent 7-cyano-7-deazaguanine reductase from Nitratiruptor sp. (strain SB155-2).